Here is a 141-residue protein sequence, read N- to C-terminus: Large ribosomal subunit protein uL11 (141 aa).

Belongs to the universal ribosomal protein uL11 family. In terms of assembly, part of the ribosomal stalk of the 50S ribosomal subunit. Interacts with L10 and the large rRNA to form the base of the stalk. L10 forms an elongated spine to which L12 dimers bind in a sequential fashion forming a multimeric L10(L12)X complex. In terms of processing, one or more lysine residues are methylated.

Functionally, forms part of the ribosomal stalk which helps the ribosome interact with GTP-bound translation factors. The protein is Large ribosomal subunit protein uL11 of Prochlorococcus marinus (strain MIT 9211).